A 180-amino-acid polypeptide reads, in one-letter code: LDLR chaperone boca (180 aa).

The signal sequence occupies residues 1-18 (MQTRLVLLLLALTPLVLA). Residues 48–61 (QWEEDEEPLEDDEL) are compositionally biased toward acidic residues. Positions 48-78 (QWEEDEEPLEDDELPEHLRPQPKLDLSNLDS) are disordered. A structured core region spans residues 93 to 166 (TLMTFVSVTG…QERCKGVTIE (74 aa)). The Prevents secretion from ER signature appears at 177–180 (KDEL).

Belongs to the MESD family. In terms of assembly, monomer. Interacts with Arrow and Yolkless.

The protein resides in the endoplasmic reticulum. Chaperone specifically assisting the folding of beta-propeller/EGF modules within the family of low-density lipoprotein receptors (LDLRs). Acts as a modulator of the Wg pathway, since some LDLRs are coreceptors for the canonical Wnt pathway. In Drosophila melanogaster (Fruit fly), this protein is LDLR chaperone boca (boca).